Consider the following 81-residue polypeptide: UPF0410 protein YwzA (81 aa).

Helical transmembrane passes span 1 to 21, 27 to 47, and 56 to 76; these read MSFLISLIVAIIIGWLGSLFV, GGIIGSMIAGLIGAWIGHGLL, and GFAIIPAVIGAAIVVFLVSLL.

It belongs to the UPF0410 family.

Its subcellular location is the cell membrane. The polypeptide is UPF0410 protein YwzA (ywzA) (Bacillus subtilis (strain 168)).